The sequence spans 102 residues: Hypersensitivity to hygromycin-B protein 1 (102 aa).

The N-terminal stretch at Met-1 to Ser-17 is a signal peptide. A helical transmembrane segment spans residues Ser-18–Pro-38. Topologically, residues His-39–Lys-69 are cytoplasmic. Residues Leu-70 to Val-90 form a helical membrane-spanning segment. The Extracellular segment spans residues Ser-91–Ser-102.

Its subcellular location is the membrane. Involved in vacuolar trafficking. The sequence is that of Hypersensitivity to hygromycin-B protein 1 from Saccharomyces cerevisiae (strain ATCC 204508 / S288c) (Baker's yeast).